The chain runs to 84 residues: Esculentin-1ISb (84 aa).

A signal peptide spans 1–22 (MFTLKKPLLLIVLLGIISLSLC). A propeptide spans 23-36 (EQERAADEDEGTKI) (removed in mature form). A disulfide bridge links cysteine 78 with cysteine 84.

In terms of tissue distribution, expressed by the skin glands.

Its subcellular location is the secreted. Has antimicrobial activity against Gram-negative bacterium E.coli ATCC 8739 (MIC=3.1 ug), against Gram positive bacteria S.aureus ATCC 6538 (MIC=3.1 ug), methicillin-resistant S.aureus ATCC 43300 (MIC=12.5 ug), B.subtilis ATCC 6633 (MIC=12.5 ug) and against fungus C.albicans ATCC 90028 (MIC=50 ug). This Odorrana ishikawae (Ishikawa's frog) protein is Esculentin-1ISb.